The sequence spans 79 residues: Cell division protein ZapB (79 aa).

A coiled-coil region spans residues 6 to 78 (FEKLEVKVQQ…LRALLGKMEE (73 aa)).

The protein belongs to the ZapB family. As to quaternary structure, homodimer. The ends of the coiled-coil dimer bind to each other, forming polymers. Interacts with FtsZ.

Its subcellular location is the cytoplasm. Non-essential, abundant cell division factor that is required for proper Z-ring formation. It is recruited early to the divisome by direct interaction with FtsZ, stimulating Z-ring assembly and thereby promoting cell division earlier in the cell cycle. Its recruitment to the Z-ring requires functional FtsA or ZipA. The protein is Cell division protein ZapB of Yersinia pseudotuberculosis serotype O:1b (strain IP 31758).